The following is a 216-amino-acid chain: Probable GTP-binding protein EngB (216 aa).

An EngB-type G domain is found at 23 to 197 (EGAEIAFAGR…EHKVAGWLGL (175 aa)). Residues 31 to 38 (GRSNAGKS), 58 to 62 (GRTQL), 76 to 79 (DLPG), 143 to 146 (TKCD), and 176 to 178 (FSS) contribute to the GTP site. Positions 38 and 60 each coordinate Mg(2+).

The protein belongs to the TRAFAC class TrmE-Era-EngA-EngB-Septin-like GTPase superfamily. EngB GTPase family. Mg(2+) serves as cofactor.

Its function is as follows. Necessary for normal cell division and for the maintenance of normal septation. In Aromatoleum aromaticum (strain DSM 19018 / LMG 30748 / EbN1) (Azoarcus sp. (strain EbN1)), this protein is Probable GTP-binding protein EngB.